The following is a 124-amino-acid chain: Putative calmodulin-3 (124 aa).

EF-hand domains follow at residues 1–18 (GCIT…LGQN), 19–54 (PTEA…KIKD), 56–91 (DFEE…LGEK), and 92–124 (LTDE…MMAK). Residues C2, E7, D32, D34, N36, T38, E43, D69, D71, N73, and E80 each contribute to the Ca(2+) site. K91 carries the post-translational modification N6,N6,N6-trimethyllysine. Residues D105, D107, D109, Q111, and E116 each contribute to the Ca(2+) site.

It belongs to the calmodulin family. As to expression, not detected in the organs tested.

Its function is as follows. Calmodulin mediates the control of a large number of enzymes, ion channels and other proteins by Ca(2+). Among the enzymes to be stimulated by the calmodulin-Ca(2+) complex are a number of protein kinases and phosphatases. The sequence is that of Putative calmodulin-3 (PCM3) from Solanum tuberosum (Potato).